We begin with the raw amino-acid sequence, 411 residues long: Methylthioribose-1-phosphate isomerase (411 aa).

D284 functions as the Proton donor in the catalytic mechanism.

This sequence belongs to the eIF-2B alpha/beta/delta subunits family. MtnA subfamily.

The protein resides in the cytoplasm. The protein localises to the nucleus. The enzyme catalyses 5-(methylsulfanyl)-alpha-D-ribose 1-phosphate = 5-(methylsulfanyl)-D-ribulose 1-phosphate. The protein operates within amino-acid biosynthesis; L-methionine biosynthesis via salvage pathway; L-methionine from S-methyl-5-thio-alpha-D-ribose 1-phosphate: step 1/6. Its function is as follows. Catalyzes the interconversion of methylthioribose-1-phosphate (MTR-1-P) into methylthioribulose-1-phosphate (MTRu-1-P). This Komagataella phaffii (strain GS115 / ATCC 20864) (Yeast) protein is Methylthioribose-1-phosphate isomerase.